A 605-amino-acid chain; its full sequence is Glucose oxidase (605 aa).

The signal sequence occupies residues 1 to 16; that stretch reads MQTLLVSSLVVSLAAA. The FAD site is built by Leu-51 and Thr-52. Asn-65 is a glycosylation site (N-linked (GlcNAc...) asparagine). Residue Glu-72 participates in FAD binding. An N-linked (GlcNAc...) asparagine glycan is attached at Asn-111. Ser-125, Asn-129, Gly-130, and Thr-132 together coordinate FAD. N-linked (GlcNAc...) asparagine glycosylation is found at Asn-183 and Asn-190. The cysteines at positions 186 and 228 are disulfide-linked. Val-272 is an FAD binding site. Residues Asn-280, Asn-377, Asn-410, and Asn-495 are each glycosylated (N-linked (GlcNAc...) asparagine). The active-site Proton acceptor is the His-538. O2 is bound by residues Arg-559 and Val-560. Gly-571 and Met-583 together coordinate FAD.

This sequence belongs to the GMC oxidoreductase family. In terms of assembly, homodimer. Requires FAD as cofactor. The N-linked sugar chains of the glucose oxidase contributed to the high solubility of the enzyme in water.

Its subcellular location is the secreted. The protein localises to the cell wall. The protein resides in the cytoplasm. It localises to the extracellular space. It is found in the extracellular matrix. It carries out the reaction beta-D-glucose + O2 = D-glucono-1,5-lactone + H2O2. In terms of biological role, glucose oxidase catalyzes the oxidation of beta-D-glucose to D-glucono-delta-lactone and hydrogen peroxide in the presence of molecular oxygen. D-glucono-delta-lactone is sequentially hydrolyzed by lactonase to D-gluconic acid, and the resulting hydrogen peroxide is hydrolyzed by catalase to oxygen and water. The activity shows high specificity to beta-D-glucose, with very low to no activity towards L-glucose, 2-deoxy-D-glucose, 3-deoxy-D-glucose, 4-deoxy-D-glucose, 5-deoxy-D-glucose, 6-deoxy-D-glucose, 3-O-methyl-D-glucose, 4-O-methyl-D-glucose, 6-O-methyl-D-glucose, 4,6-O-benzylidene-D-glucose, 5-thio-5-deoxy-D-glucose, D-mannose, D-allose, D-galactose, D-fructose, D-arabinose, D-xylose, trehalose, melibiose, L-mannomethylose, lactose, sucrose or 1,5-anhydro-D-glucitol. This is Glucose oxidase from Aspergillus niger.